Here is a 407-residue protein sequence, read N- to C-terminus: Tryptophan synthase beta chain (407 aa).

N6-(pyridoxal phosphate)lysine is present on lysine 98.

The protein belongs to the TrpB family. Tetramer of two alpha and two beta chains. Pyridoxal 5'-phosphate is required as a cofactor.

It carries out the reaction (1S,2R)-1-C-(indol-3-yl)glycerol 3-phosphate + L-serine = D-glyceraldehyde 3-phosphate + L-tryptophan + H2O. Its pathway is amino-acid biosynthesis; L-tryptophan biosynthesis; L-tryptophan from chorismate: step 5/5. Functionally, the beta subunit is responsible for the synthesis of L-tryptophan from indole and L-serine. The sequence is that of Tryptophan synthase beta chain from Bradyrhizobium sp. (strain ORS 278).